Consider the following 267-residue polypeptide: Geranylgeranylglyceryl phosphate synthase (267 aa).

Mg(2+)-binding residues include Asp23 and Ser52. Residues 173–179 (YLEAGSG), 205–206 (GG), and 227–228 (GT) contribute to the sn-glycerol 1-phosphate site.

This sequence belongs to the GGGP/HepGP synthase family. Group II subfamily. Requires Mg(2+) as cofactor.

The protein localises to the cytoplasm. It catalyses the reaction sn-glycerol 1-phosphate + (2E,6E,10E)-geranylgeranyl diphosphate = sn-3-O-(geranylgeranyl)glycerol 1-phosphate + diphosphate. Its pathway is membrane lipid metabolism; glycerophospholipid metabolism. Its function is as follows. Prenyltransferase that catalyzes the transfer of the geranylgeranyl moiety of geranylgeranyl diphosphate (GGPP) to the C3 hydroxyl of sn-glycerol-1-phosphate (G1P). This reaction is the first ether-bond-formation step in the biosynthesis of archaeal membrane lipids. This is Geranylgeranylglyceryl phosphate synthase from Caldivirga maquilingensis (strain ATCC 700844 / DSM 13496 / JCM 10307 / IC-167).